Consider the following 415-residue polypeptide: MAAAAVTAVAGVTSGSSRKRLLREEDMTKVEFETSEEVDVTPTFDTMGLREDLLRGIYAYGFEKPSAIQQRAIKQIIKGRDVIAQSQSGTGKTATFCVSVLQCLDIQVRETQALILAPTRELAGQIQKVLLALGDYMNVQCHACIGGTNVGEDIRKLDYGQHVVAGTPGRVFDMIRRRSLRTRAIKMLVLDEADEMLNKGFKEQIYDVYRYLPPATQVCLISATLPHEILEMTNKFMTDPIRILVKRDELTLEGIKQFFVAVEREEWKFDTLCDLYDTLTITQAVIFCNTKRKVDWLTEKMREANFTVSSMHGDMPQKERESIMKEFRSGASRVLISTDVWARGLDVPQVSLIINYDLPNNRELYIHRIGRSGRYGRKGVAINFVKNDDIRILRDIEQYYSTQIDEMPMNVADLI.

The Q motif motif lies at 42 to 70; it reads PTFDTMGLREDLLRGIYAYGFEKPSAIQQ. ATP contacts are provided by residues K64, Q69, 86-93, and 89-94; these read SQSGTGKT and GTGKTA. The Helicase ATP-binding domain occupies 73–243; that stretch reads IKQIIKGRDV…NKFMTDPIRI (171 aa). Positions 191–194 match the DEAD box motif; it reads DEAD. The 162-residue stretch at 254-415 folds into the Helicase C-terminal domain; the sequence is GIKQFFVAVE…EMPMNVADLI (162 aa). Residues D346 and 371 to 375 contribute to the ATP site; that span reads RSGRY.

This sequence belongs to the DEAD box helicase family. eIF4A subfamily. Identified in the spliceosome C complex. Part of the mRNA splicing-dependent exon junction complex (EJC) complex; the core complex contains casc3, eif4a3, magoh and rbm8a.

It is found in the nucleus. The protein localises to the nucleus speckle. Its subcellular location is the cytoplasm. It carries out the reaction ATP + H2O = ADP + phosphate + H(+). ATP-dependent RNA helicase. Involved in pre-mRNA splicing as component of the spliceosome. Core component of the splicing-dependent multiprotein exon junction complex (EJC) deposited at splice junctions on mRNAs. The EJC is a dynamic structure consisting of core proteins and several peripheral nuclear and cytoplasmic associated factors that join the complex only transiently either during EJC assembly or during subsequent mRNA metabolism. The EJC marks the position of the exon-exon junction in the mature mRNA for the gene expression machinery and the core components remain bound to spliced mRNAs throughout all stages of mRNA metabolism thereby influencing downstream processes including nuclear mRNA export, subcellular mRNA localization, translation efficiency and nonsense-mediated mRNA decay (NMD). Binds spliced mRNA in sequence-independent manner, 20-24 nucleotides upstream of mRNA exon-exon junctions. Involved in craniofacial development. This is Eukaryotic initiation factor 4A-III (eif4a3) from Xenopus tropicalis (Western clawed frog).